The chain runs to 340 residues: Methionine import ATP-binding protein MetN 1 (340 aa).

Positions 2–242 (IRLENVSVDF…PQHAYTKQLV (241 aa)) constitute an ABC transporter domain. 39-46 (GTSGAGKS) contributes to the ATP binding site.

It belongs to the ABC transporter superfamily. Methionine importer (TC 3.A.1.24) family. The complex is composed of two ATP-binding proteins (MetN), two transmembrane proteins (MetI) and a solute-binding protein (MetQ).

Its subcellular location is the cell inner membrane. The enzyme catalyses L-methionine(out) + ATP + H2O = L-methionine(in) + ADP + phosphate + H(+). It carries out the reaction D-methionine(out) + ATP + H2O = D-methionine(in) + ADP + phosphate + H(+). Its function is as follows. Part of the ABC transporter complex MetNIQ involved in methionine import. Responsible for energy coupling to the transport system. This is Methionine import ATP-binding protein MetN 1 from Pectobacterium atrosepticum (strain SCRI 1043 / ATCC BAA-672) (Erwinia carotovora subsp. atroseptica).